A 251-amino-acid chain; its full sequence is SRR1-like protein (251 aa).

The protein belongs to the SRR1 family.

It is found in the cytoplasm. It localises to the nucleus. This chain is SRR1-like protein, found in Schizosaccharomyces pombe (strain 972 / ATCC 24843) (Fission yeast).